A 389-amino-acid polypeptide reads, in one-letter code: S-adenosylmethionine synthase (389 aa).

Residue His-15 coordinates ATP. Asp-17 is a binding site for Mg(2+). Glu-43 lines the K(+) pocket. The L-methionine site is built by Glu-56 and Gln-99. Positions 99 to 109 are flexible loop; the sequence is QSPDIAQGVNE. Residues 166 to 168, 234 to 235, Asp-243, 249 to 250, Ala-266, and Lys-270 each bind ATP; these read DAK, RF, and RK. Asp-243 contacts L-methionine. Lys-274 is a binding site for L-methionine.

This sequence belongs to the AdoMet synthase family. In terms of assembly, homotetramer; dimer of dimers. Mg(2+) serves as cofactor. The cofactor is K(+).

Its subcellular location is the cytoplasm. The catalysed reaction is L-methionine + ATP + H2O = S-adenosyl-L-methionine + phosphate + diphosphate. Its pathway is amino-acid biosynthesis; S-adenosyl-L-methionine biosynthesis; S-adenosyl-L-methionine from L-methionine: step 1/1. In terms of biological role, catalyzes the formation of S-adenosylmethionine (AdoMet) from methionine and ATP. The overall synthetic reaction is composed of two sequential steps, AdoMet formation and the subsequent tripolyphosphate hydrolysis which occurs prior to release of AdoMet from the enzyme. This chain is S-adenosylmethionine synthase, found in Neisseria meningitidis serogroup A / serotype 4A (strain DSM 15465 / Z2491).